Reading from the N-terminus, the 302-residue chain is Cell division protein FtsQ (302 aa).

Residues 1–41 (MPAVVRGGPPKPRRPRAEAPASPSKGKPAPRKAQPAAKLHA) form a disordered region. The Cytoplasmic portion of the chain corresponds to 1–50 (MPAVVRGGPPKPRRPRAEAPASPSKGKPAPRKAQPAAKLHAARGVGLSPT). Over residues 18 to 38 (EAPASPSKGKPAPRKAQPAAK) the composition is skewed to low complexity. A helical transmembrane segment spans residues 51-71 (VALSVAGAALGLGLVVMLATG). The Periplasmic portion of the chain corresponds to 72 to 302 (HRAERLGASM…LPGQPAADGA (231 aa)). Positions 94–162 (FRLKTVHIRG…DTVLIAVEER (69 aa)) constitute a POTRA domain.

Belongs to the FtsQ/DivIB family. FtsQ subfamily.

It is found in the cell inner membrane. Functionally, essential cell division protein. The sequence is that of Cell division protein FtsQ from Caulobacter vibrioides (strain ATCC 19089 / CIP 103742 / CB 15) (Caulobacter crescentus).